The primary structure comprises 126 residues: Small ribosomal subunit protein uS8 (126 aa).

It belongs to the universal ribosomal protein uS8 family. As to quaternary structure, part of the 30S ribosomal subunit. Contacts proteins S5 and S12.

One of the primary rRNA binding proteins, it binds directly to 16S rRNA central domain where it helps coordinate assembly of the platform of the 30S subunit. This Nitratidesulfovibrio vulgaris (strain DSM 19637 / Miyazaki F) (Desulfovibrio vulgaris) protein is Small ribosomal subunit protein uS8.